Reading from the N-terminus, the 150-residue chain is UPF0336 protein SGR_2883 (150 aa).

Residues 10-116 (RTYPPTPAYE…STIEAVKSLA (107 aa)) enclose the MaoC-like domain.

It belongs to the UPF0336 family.

This chain is UPF0336 protein SGR_2883, found in Streptomyces griseus subsp. griseus (strain JCM 4626 / CBS 651.72 / NBRC 13350 / KCC S-0626 / ISP 5235).